The chain runs to 142 residues: Large ribosomal subunit protein uL13 (142 aa).

The protein belongs to the universal ribosomal protein uL13 family. As to quaternary structure, part of the 50S ribosomal subunit.

Its function is as follows. This protein is one of the early assembly proteins of the 50S ribosomal subunit, although it is not seen to bind rRNA by itself. It is important during the early stages of 50S assembly. This is Large ribosomal subunit protein uL13 from Geobacter sp. (strain M21).